A 146-amino-acid chain; its full sequence is Probable actin-related protein 2/3 complex subunit 5 (146 aa).

This sequence belongs to the ARPC5 family. Component of the Arp2/3 complex composed of ARP2, ARP3, ARPC1B/p41-ARC, ARPC2/p34-ARC, ARPC3/p21-ARC, ARPC4/p20-ARC and ARPC5/p16-ARC.

Its subcellular location is the cytoplasm. It is found in the cytoskeleton. Functionally, functions as a component of the Arp2/3 complex which is involved in regulation of actin polymerization and together with an activating nucleation-promoting factor (NPF) mediates the formation of branched actin networks. The protein is Probable actin-related protein 2/3 complex subunit 5 of Caenorhabditis elegans.